The chain runs to 201 residues: Recombination protein RecR (201 aa).

The C4-type zinc finger occupies 57–74 (CRICGFITSKDDDPCVIC). Residues 82–178 (SKIFVVENSQ…KVTRLARGLS (97 aa)) enclose the Toprim domain.

It belongs to the RecR family.

Functionally, may play a role in DNA repair. It seems to be involved in an RecBC-independent recombinational process of DNA repair. It may act with RecF and RecO. This is Recombination protein RecR from Oenococcus oeni (strain ATCC BAA-331 / PSU-1).